The sequence spans 446 residues: Long-chain fatty acid transport protein (446 aa).

A signal peptide spans 1-25 (MSQKTLFTKSALAVAVALISTQAWS).

Belongs to the OmpP1/FadL family. In terms of assembly, has been isolated from outer membrane preparation as a homodimer.

The protein resides in the cell outer membrane. In terms of biological role, involved in translocation of long-chain fatty acids across the outer membrane. It is a receptor for the bacteriophage T2. FadL may form a specific channel. The sequence is that of Long-chain fatty acid transport protein (fadL) from Escherichia coli (strain K12).